We begin with the raw amino-acid sequence, 129 residues long: UPF0102 protein Cpar_0015 (129 aa).

The protein belongs to the UPF0102 family.

The chain is UPF0102 protein Cpar_0015 from Chlorobaculum parvum (strain DSM 263 / NCIMB 8327) (Chlorobium vibrioforme subsp. thiosulfatophilum).